Here is a 470-residue protein sequence, read N- to C-terminus: Trigger factor (470 aa).

In terms of domain architecture, PPIase FKBP-type spans 164–243 (GDYVVIDMTA…VTAVKVQELP (80 aa)). Composition is skewed to acidic residues over residues 424–438 (ETDA…ESVE) and 445–470 (AEDD…AAKA). Residues 424–470 (ETDAEDAAEGVESVEVDLSAAAEDDAEETSDEPAAEDTATEDEAAKA) form a disordered region.

Belongs to the FKBP-type PPIase family. Tig subfamily.

Its subcellular location is the cytoplasm. The catalysed reaction is [protein]-peptidylproline (omega=180) = [protein]-peptidylproline (omega=0). Its function is as follows. Involved in protein export. Acts as a chaperone by maintaining the newly synthesized protein in an open conformation. Functions as a peptidyl-prolyl cis-trans isomerase. In Beutenbergia cavernae (strain ATCC BAA-8 / DSM 12333 / CCUG 43141 / JCM 11478 / NBRC 16432 / NCIMB 13614 / HKI 0122), this protein is Trigger factor.